We begin with the raw amino-acid sequence, 139 residues long: Maximins 4/H3 type 4 (139 aa).

The first 18 residues, 1–18 (MNFKYIIAVSFLIASAYA), serve as a signal peptide directing secretion. Positions 19 to 43 (RSVQNDEQSLSQRDVLEEESLREIR) are excised as a propeptide. Asn70 is modified (asparagine amide). Positions 74 to 118 (TAEEHEVMKRLEAVMRDLDSLDHPEEASERETRGFNQDEIAKEKR) are excised as a propeptide. At Ile138 the chain carries Isoleucine amide.

This sequence belongs to the bombinin family. Expressed by the skin glands.

It is found in the secreted. In terms of biological role, maximin-4 shows antibacterial activity against both Gram-positive and Gram-negative bacteria. It also shows antimicrobial activity against the fungus C.albicans, but not against A.flavus nor P.uticale. It has little hemolytic activity. It does not possess a significant cytotoxicity against tumor cell lines. It does not possess a significant anti-HIV activity. Functionally, maximin-H3 shows antibacterial activity against both Gram-positive and Gram-negative bacteria. It also shows antimicrobial activity against the fungus C.albicans. Shows strong hemolytic activity. This is Maximins 4/H3 type 4 from Bombina maxima (Giant fire-bellied toad).